A 360-amino-acid chain; its full sequence is Peptide chain release factor 1 (360 aa).

N5-methylglutamine is present on Gln236. The segment at 288–308 (QDEQDAERKSTIGTGDRSERI) is disordered. Residues 293–308 (AERKSTIGTGDRSERI) show a composition bias toward basic and acidic residues.

It belongs to the prokaryotic/mitochondrial release factor family. Methylated by PrmC. Methylation increases the termination efficiency of RF1.

It localises to the cytoplasm. Functionally, peptide chain release factor 1 directs the termination of translation in response to the peptide chain termination codons UAG and UAA. This Streptococcus equi subsp. equi (strain 4047) protein is Peptide chain release factor 1.